Reading from the N-terminus, the 1203-residue chain is Plasma membrane calcium-transporting ATPase 4 (1203 aa).

The Cytoplasmic segment spans residues 1–92 (MTNPSGHNLP…NMIPPKKPKT (92 aa)). Ser-13 carries the post-translational modification Phosphoserine. A helical membrane pass occupies residues 93–113 (FLELVWEALQDVTLIILEIAA). Over 114 to 150 (IISLVLSFYRPPGGENEICGHIVSNPEEDEEGETGWI) the chain is Extracellular. A helical membrane pass occupies residues 151-171 (EGAAILASVIIVVFVTAFNDW). At 172-356 (SKEKQFRGLQ…KEKSVLQGKL (185 aa)) the chain is on the cytoplasmic side. The disordered stretch occupies residues 294 to 319 (DDEKKKKGKKQGVSENRNKAKTQDGV). Ser-328 and Ser-334 each carry phosphoserine. Residues 330–349 (EGLDSEEKEKKASKGPKKEK) are disordered. Basic and acidic residues predominate over residues 334-349 (SEEKEKKASKGPKKEK). A helical membrane pass occupies residues 357–376 (TRLAVQIGKAGLIMSILTVL). Over 377 to 409 (ILILYFVVDNFVIQRRAWLPECTPVYIQYFVKF) the chain is Extracellular. Residues 410–427 (FIIGVTVLVVAVPEGLPL) traverse the membrane as a helical segment. At 428-840 (AVTISLAYSV…MWGRNVYDSI (413 aa)) the chain is on the cytoplasmic side. Asp-465 (4-aspartylphosphate intermediate) is an active-site residue. 2 residues coordinate Mg(2+): Asp-785 and Asp-789. A helical membrane pass occupies residues 841–860 (SKFLQFQLTVNVVAVIVAFS). The Extracellular segment spans residues 861-870 (GACITQDSPL). A helical transmembrane segment spans residues 871–891 (KAVQMLWVNLIMDTFASLALA). Residues 892 to 911 (TEPPTDSLLRRRPYGRNKPL) lie on the Cytoplasmic side of the membrane. A helical transmembrane segment spans residues 912–934 (ISRTMMKNILGHAVYQLGIVFLL). At 935–952 (VFAGDKLFDIDSGRKAPL) the chain is on the extracellular side. The helical transmembrane segment at 953–974 (NSPPSQHYTIVFNTFVLMQLFN) threads the bilayer. Over 975–993 (EINSRKIHGEKNVFAGVYR) the chain is Cytoplasmic. The chain crosses the membrane as a helical span at residues 994–1015 (NIIFCSVVLGTFFCQILIVEVG). The Extracellular segment spans residues 1016 to 1025 (GKPFSCTNLT). A helical transmembrane segment spans residues 1026–1047 (MEQWMWCLFIGIGELLWGQVIS). Topologically, residues 1048-1203 (AIPTKSLKFL…SPLQSQETPV (156 aa)) are cytoplasmic. Residues Ser-1064 and Ser-1070 each carry the phosphoserine modification. The interval 1086–1103 (LRRGQILWVRGLNRIQTQ) is calmodulin-binding subdomain A. Phosphothreonine; by PKC is present on Thr-1102. Gln-1103 carries the phosphoserine modification. The tract at residues 1104 to 1113 (IRVVKVFHSF) is calmodulin-binding subdomain B. Phosphoserine is present on residues Arg-1114, Asp-1115, Ile-1126, and Ser-1144.

It belongs to the cation transport ATPase (P-type) (TC 3.A.3) family. Type IIB subfamily. Interacts with PDZD11. Interacts with SLC35G1 and STIM1. Interacts with calmodulin. Ubiquitously expressed. Not detected in liver. The highest levels are found in uterus and stomach. Isoform XA is found in uterus, brain, stomach, small intestine, colon and pancreas. Isoform XB is found in uterus, skeletal muscle, lung, kidney, spleen, stomach, small intestine and pancreas. Isoform ZA is found in testis and isoform ZB is found in testis and heart.

The protein localises to the cell membrane. The protein resides in the cell projection. It localises to the cilium. Its subcellular location is the flagellum membrane. The enzyme catalyses Ca(2+)(in) + ATP + H2O = Ca(2+)(out) + ADP + phosphate + H(+). Its activity is regulated as follows. Activated by calcium/calmodulin. In terms of biological role, calcium/calmodulin-regulated and magnesium-dependent enzyme that catalyzes the hydrolysis of ATP coupled with the transport of calcium out of the cell. By regulating sperm cell calcium homeostasis, may play a role in sperm motility. This chain is Plasma membrane calcium-transporting ATPase 4, found in Rattus norvegicus (Rat).